Here is a 399-residue protein sequence, read N- to C-terminus: Mycinamicin VI 2''-O-methyltransferase (399 aa).

S-adenosyl-L-methionine contacts are provided by residues Thr-173, 202 to 208 (EIGVGGY), Ser-217, Asp-234, 252 to 253 (DQ), and Asp-275. Residue Asp-275 coordinates Mg(2+). His-278 (proton acceptor) is an active-site residue. Mg(2+)-binding residues include Glu-303 and Asp-304.

This sequence belongs to the methyltransferase OleY/MycE family. In terms of assembly, homotetramer. The cofactor is Mg(2+).

It carries out the reaction mycinamicin VI + S-adenosyl-L-methionine = mycinamicin III + S-adenosyl-L-homocysteine + H(+). It participates in antibiotic biosynthesis; mycinamicin biosynthesis. In terms of biological role, O-methyltransferase that catalyzes the conversion of mycinamicin VI to mycinamicin III in the biosynthesis of mycinamicin, a 16-membered macrolide antibiotic. This chain is Mycinamicin VI 2''-O-methyltransferase (mycE), found in Micromonospora griseorubida.